The following is a 485-amino-acid chain: Inosine-5'-monophosphate dehydrogenase (485 aa).

CBS domains follow at residues 95 to 154 (VITN…IDDV) and 155 to 215 (MTKE…AKDS). Residues D249 and 299–301 (GIG) contribute to the NAD(+) site. K(+)-binding residues include G301 and G303. Position 304 (S304) interacts with IMP. Position 306 (C306) interacts with K(+). C306 (thioimidate intermediate) is an active-site residue. IMP contacts are provided by residues 339–341 (DGG), 362–363 (GS), and 386–390 (YRGMG). R402 serves as the catalytic Proton acceptor. E414 provides a ligand contact to IMP. The K(+) site is built by E468, S469, and H470.

The protein belongs to the IMPDH/GMPR family. In terms of assembly, homotetramer. The cofactor is K(+).

The catalysed reaction is IMP + NAD(+) + H2O = XMP + NADH + H(+). Its pathway is purine metabolism; XMP biosynthesis via de novo pathway; XMP from IMP: step 1/1. Its activity is regulated as follows. Mycophenolic acid (MPA) is a non-competitive inhibitor that prevents formation of the closed enzyme conformation by binding to the same site as the amobile flap. In contrast, mizoribine monophosphate (MZP) is a competitive inhibitor that induces the closed conformation. MPA is a potent inhibitor of mammalian IMPDHs but a poor inhibitor of the bacterial enzymes. MZP is a more potent inhibitor of bacterial IMPDH. Catalyzes the conversion of inosine 5'-phosphate (IMP) to xanthosine 5'-phosphate (XMP), the first committed and rate-limiting step in the de novo synthesis of guanine nucleotides, and therefore plays an important role in the regulation of cell growth. The polypeptide is Inosine-5'-monophosphate dehydrogenase (Halalkalibacterium halodurans (strain ATCC BAA-125 / DSM 18197 / FERM 7344 / JCM 9153 / C-125) (Bacillus halodurans)).